A 419-amino-acid chain; its full sequence is uncharacterized protein (419 aa).

11 consecutive transmembrane segments (helical) span residues 1–21 (MTTV…FLIL), 24–44 (VSPA…GGAD), 66–86 (ILAA…NSIT), 101–121 (ALAL…VAVI), 174–194 (SVMM…YFLA), 216–236 (NLPS…LLAL), 242–262 (IKVD…FCMG), 280–300 (PVAI…NSGL), 311–331 (SGLP…LATA), 349–369 (LELG…ATVF), and 396–416 (IPYE…IFGV).

This sequence belongs to the CitM (TC 2.A.11) transporter family.

It localises to the cell membrane. This is an uncharacterized protein from Haemophilus influenzae (strain ATCC 51907 / DSM 11121 / KW20 / Rd).